The primary structure comprises 255 residues: MAVGKNKRLSKGKKGLKKKTDTFAKKDWYNIKAPGTFAVRDVGKTLVNRTTGLKNANDALKGRIFEVSLADLQKDEDHAFRKVKLRVDEVQGKNCLTNFHGLDFTSDKLRSLVRKWQTLIEANVVVKTTDDYLLRLFCIAFTKRRPNQVKKTTYAQSSQIRAIRKKMVEIMARDASSCTLAQLTQKLIPEVIGREIEKATQGIYPLQNVHVRKVKLLKAPKFDLGALLGLHGESSQDDSGQKVEREFKETVLEQV.

The residue at position 2 (Ala-2) is an N-acetylalanine; partial.

Belongs to the eukaryotic ribosomal protein eS1 family. Component of the small ribosomal subunit. Mature ribosomes consist of a small (40S) and a large (60S) subunit. The 40S subunit contains about 33 different proteins and 1 molecule of RNA (18S). The 60S subunit contains about 49 different proteins and 3 molecules of RNA (25S, 5.8S and 5S).

Its subcellular location is the cytoplasm. The sequence is that of Small ribosomal subunit protein eS1 (rps1) from Pyrenophora tritici-repentis (strain Pt-1C-BFP) (Wheat tan spot fungus).